We begin with the raw amino-acid sequence, 182 residues long: UPF0423 protein BRA0381/BS1330_II0378 (182 aa).

Residues 1–24 form the signal peptide; sequence MKNLFRTAALMVPLSLALAYGAQA.

This sequence belongs to the UPF0423 family.

The chain is UPF0423 protein BRA0381/BS1330_II0378 from Brucella suis biovar 1 (strain 1330).